The sequence spans 276 residues: Molybdenum storage protein subunit alpha (276 aa).

As to quaternary structure, octamer consisting of 4 alpha and 4 beta chains.

It localises to the cytoplasm. Its function is as follows. Intracellular storage of molybdenum. Binds polyoxomolybdates. Can bind at least 90 molybdenum atoms per protein molecule. The polypeptide is Molybdenum storage protein subunit alpha (Azotobacter vinelandii (strain DJ / ATCC BAA-1303)).